The following is a 148-amino-acid chain: Large ribosomal subunit protein bL9 (148 aa).

Belongs to the bacterial ribosomal protein bL9 family.

Binds to the 23S rRNA. The protein is Large ribosomal subunit protein bL9 of Salinispora arenicola (strain CNS-205).